The primary structure comprises 572 residues: Phosphoglucomutase-1 (572 aa).

Substrate contacts are provided by residues Thr23, Arg27, 126 to 127 (SH), and Lys140. Ser126 (phosphoserine intermediate) is an active-site residue. Ser126 contacts Mg(2+). Mg(2+) is bound by residues Asp308, Asp310, and Asp312. Substrate is bound by residues 312–313 (DR), Thr373, 392–394 (EES), Lys405, and Arg527.

It belongs to the phosphohexose mutase family. Mg(2+) is required as a cofactor. Post-translationally, phosphorylated via a calcium-dependent protein kinase. Very rapidly (within 80 ms) dephosphorylated during triggered trichocyst exocytosis. In terms of processing, O-glycosylated with a short chain of mannose residues.

It localises to the cytoplasm. The enzyme catalyses alpha-D-glucose 1-phosphate = alpha-D-glucose 6-phosphate. In terms of biological role, may be involved in membrane fusion in exocytosis. The chain is Phosphoglucomutase-1 (pp63-1) from Paramecium tetraurelia.